The chain runs to 314 residues: tRNA dimethylallyltransferase (314 aa).

9 to 16 is an ATP binding site; the sequence is GPTAVGKT. 11-16 is a substrate binding site; that stretch reads TAVGKT. The tract at residues 34–37 is interaction with substrate tRNA; the sequence is DSVQ.

This sequence belongs to the IPP transferase family. In terms of assembly, monomer. Mg(2+) serves as cofactor.

It catalyses the reaction adenosine(37) in tRNA + dimethylallyl diphosphate = N(6)-dimethylallyladenosine(37) in tRNA + diphosphate. In terms of biological role, catalyzes the transfer of a dimethylallyl group onto the adenine at position 37 in tRNAs that read codons beginning with uridine, leading to the formation of N6-(dimethylallyl)adenosine (i(6)A). This chain is tRNA dimethylallyltransferase, found in Desulfitobacterium hafniense (strain Y51).